A 404-amino-acid chain; its full sequence is Pectate lyase E (404 aa).

The first 41 residues, 1–41, serve as a signal peptide directing secretion; that stretch reads MNNSRMSSVSTQKTTGRSALGTKSALAAIIATTMMVSVASA. Ca(2+) is bound by residues aspartate 182 and aspartate 225. Arginine 278 is an active-site residue.

The protein belongs to the polysaccharide lyase 1 family. PLBC subfamily. Requires Ca(2+) as cofactor.

It is found in the secreted. The enzyme catalyses Eliminative cleavage of (1-&gt;4)-alpha-D-galacturonan to give oligosaccharides with 4-deoxy-alpha-D-galact-4-enuronosyl groups at their non-reducing ends.. Its pathway is glycan metabolism; pectin degradation; 2-dehydro-3-deoxy-D-gluconate from pectin: step 2/5. Its function is as follows. Involved in maceration and soft-rotting of plant tissue. Pectate lyases have been implicated as pathogenicity factors which induce maceration or rotting of plant tissue. PelE is sufficient to induce these effects under laboratory conditions. The sequence is that of Pectate lyase E (pelE) from Dickeya chrysanthemi (Pectobacterium chrysanthemi).